The chain runs to 707 residues: MSERLSEISRHMRELRDAIELHNIRYYELDTPTIPDADFDKLFRELEELEQRHPELITPDSPTQRVGIPPLKAFPQVVHRTPMLSLSNAFTEGEVEAFDRRVRQSLGIAQVEYAVEPKFDGLAISLCYENGMLVSGATRGDGYIGEDVTLNLKTIRSIPLGLRAGDGSAEVPAFLEVRGEVLMLKADFERLNRQQREKNEKTFINPRNAAAGSLRQLDPCITANRNLRFFAYGIGVCEGGNVPHDTHSHLLDYLSSLRFPVMRERRTVTGVAGLLEYHHEINGLREQLSYDIDGTVYKVNELEYQEKLGFVSRAPRFALAHKFPAQEATTELLGIDVQVGRTGALTPVARLKPVFVGGATVTNATLHNEDEIRRKDVMIGDRVTVRRAGDVIPEVVAVQKESRPSNAKPFVMPEHCPVCGSRTIRLPGETLTRCTGGLFCPAQRKQAILHFASRRAMNIHGLGDKLVDHLVDNAIIRTPADLYKLGLAALAALDRMGEKSAGNIINEIEKSKDTTLARFIYSLGIRNVGEATARDLARYFGGLDRLMDADVETLQQVSDVGPVVAQSIADFFGERHNREVVEQLRAAGIRWKEGAGTQTTDHAAGSAHPGAAAASSKIAGRSFVLTGTLPTMSREEAREKIEAMGGKVAGSVSKKTDYVVAGADAGSKYDKALELGVALLDEAELIRLLQASQADNSSTHVDPERMV.

NAD(+) is bound by residues 36 to 40, 85 to 86, and Glu116; these read DADFD and SL. Lys118 serves as the catalytic N6-AMP-lysine intermediate. 4 residues coordinate NAD(+): Arg139, Glu180, Lys298, and Lys322. Zn(2+) contacts are provided by Cys416, Cys419, Cys434, and Cys440. The 95-residue stretch at 613–707 folds into the BRCT domain; it reads AASSKIAGRS…STHVDPERMV (95 aa).

The protein belongs to the NAD-dependent DNA ligase family. LigA subfamily. Mg(2+) is required as a cofactor. It depends on Mn(2+) as a cofactor.

It carries out the reaction NAD(+) + (deoxyribonucleotide)n-3'-hydroxyl + 5'-phospho-(deoxyribonucleotide)m = (deoxyribonucleotide)n+m + AMP + beta-nicotinamide D-nucleotide.. Functionally, DNA ligase that catalyzes the formation of phosphodiester linkages between 5'-phosphoryl and 3'-hydroxyl groups in double-stranded DNA using NAD as a coenzyme and as the energy source for the reaction. It is essential for DNA replication and repair of damaged DNA. The chain is DNA ligase from Nitrosospira multiformis (strain ATCC 25196 / NCIMB 11849 / C 71).